Consider the following 330-residue polypeptide: Ferredoxin--NADP reductase (330 aa).

FAD-binding residues include E35, Q43, Y48, V90, F123, D285, and T326.

Belongs to the ferredoxin--NADP reductase type 2 family. As to quaternary structure, homodimer. Requires FAD as cofactor.

It catalyses the reaction 2 reduced [2Fe-2S]-[ferredoxin] + NADP(+) + H(+) = 2 oxidized [2Fe-2S]-[ferredoxin] + NADPH. The protein is Ferredoxin--NADP reductase of Streptococcus equi subsp. zooepidemicus (strain MGCS10565).